The following is a 520-amino-acid chain: MSLVLNRTDLLVVAGALFLTFLTTRFIRAAQRYHLPPGPTRIPLLGNLHQVPLHDQQKTFAEWVKKYGDIIYIQLLSKPFVIVSSVRAAQDLMEKRAVKYSDRPYFLLLCEFVMTRPLMIFMQHGDRWRRLRRWYQGSLENKSVLEGYRPVLRREIGRLLSSLAEAPQDFMSHIKRYNGAVMLDIAYGHRVTSAEDEFMVFADKTISTVTSLGSFAATLVDFFPILRYFPAWTPGSGFKKQALMAKEMWDEMEDIPYRKLRHEMGSDAVNRSFTTFMIGEVSHDGKLGADDEIDIKGSATLMYVAGSDTTMTTMTTFVLAMTLYPEVARKAQAEIDHVVGLSRLPGLDDKDSLPYLECIIKELYRWNPPVPLGVPHRLCVDDNYRGYDIPGGSMIVPNVWAMSRDPSLYPDTKTFRPERFEGLDAQAMKFRDPRKYIFGFGRRICPGRYLADSNVWLFLASVLASMDIGRAHDAAGHEIIPTPSFKDGIISHVEPFQCTIRPRSERAAQLIRESTGNTSA.

Asn6 carries an N-linked (GlcNAc...) asparagine glycan. A helical membrane pass occupies residues 10 to 27 (LLVVAGALFLTFLTTRFI). N-linked (GlcNAc...) asparagine glycosylation is found at Asn141 and Asn270. Heme is bound at residue Cys445. Asn517 is a glycosylation site (N-linked (GlcNAc...) asparagine).

This sequence belongs to the cytochrome P450 family. Requires heme as cofactor.

It is found in the membrane. The protein operates within secondary metabolite biosynthesis. Cytochrome P450 monooxygenase that is able to use delta(6)-protoilludene as a substrate to produce delta(6)-protoilludene-5-ol and an unidentified hydroxyprotoilludene. Is also able to use phenanthrene as a substrate for oxidation. This Postia placenta (strain ATCC 44394 / Madison 698-R) (Brown rot fungus) protein is Cytochrome P450 monooxygenase 176.